A 374-amino-acid polypeptide reads, in one-letter code: CMP-N-acetylneuraminate-beta-1,4-galactoside alpha-2,3-sialyltransferase (374 aa).

The Cytoplasmic segment spans residues 1-8 (MGLLVFVR). A helical; Signal-anchor for type II membrane protein membrane pass occupies residues 9–28 (NLLLALCLFLVLGFLYYSAW). Residues 29-374 (KLHLLQWEDS…RVITDLSSGI (346 aa)) are Lumenal-facing. N-linked (GlcNAc...) asparagine glycans are attached at residues N79 and N170. C159 and C313 are joined by a disulfide.

The protein belongs to the glycosyltransferase 29 family. Post-translationally, the soluble form derives from the membrane form by proteolytic processing. In terms of tissue distribution, found in all tissues tested. High expression found in brain, liver, kidney, colon, heart and lung.

The protein resides in the golgi apparatus. It localises to the golgi stack membrane. It is found in the secreted. It catalyses the reaction a beta-D-galactosyl-(1-&gt;4)-N-acetyl-beta-D-glucosaminyl derivative + CMP-N-acetyl-beta-neuraminate = an N-acetyl-alpha-neuraminyl-(2-&gt;3)-beta-D-galactosyl-(1-&gt;4)-N-acetyl-beta-D-glucosaminyl derivative + CMP + H(+). Its pathway is protein modification; protein glycosylation. Functionally, catalyzes the formation of the NeuAc-alpha-2,3-Gal-beta-1,4-GlcNAc-, NeuAc-alpha-2,3-Gal-beta-1,3-GlcNAc- and NeuAc-alpha-2,3-Gal-beta-1,3-GalNAc- sequences found in terminal carbohydrate groups of glycoproteins and glycolipids. The highest activity is toward Gal-beta-1,3-GlcNAc and the lowest toward Gal-beta-1,3-GalNAc. The chain is CMP-N-acetylneuraminate-beta-1,4-galactoside alpha-2,3-sialyltransferase (St3gal3) from Rattus norvegicus (Rat).